A 188-amino-acid polypeptide reads, in one-letter code: ATP synthase subunit b (188 aa).

Residues 19-39 (VYVLGATIVSFLILFLFITYF) form a helical membrane-spanning segment.

It belongs to the ATPase B chain family. In terms of assembly, F-type ATPases have 2 components, F(1) - the catalytic core - and F(0) - the membrane proton channel. F(1) has five subunits: alpha(3), beta(3), gamma(1), delta(1), epsilon(1). F(0) has three main subunits: a(1), b(2) and c(10-14). The alpha and beta chains form an alternating ring which encloses part of the gamma chain. F(1) is attached to F(0) by a central stalk formed by the gamma and epsilon chains, while a peripheral stalk is formed by the delta and b chains.

The protein resides in the cell membrane. Functionally, f(1)F(0) ATP synthase produces ATP from ADP in the presence of a proton or sodium gradient. F-type ATPases consist of two structural domains, F(1) containing the extramembraneous catalytic core and F(0) containing the membrane proton channel, linked together by a central stalk and a peripheral stalk. During catalysis, ATP synthesis in the catalytic domain of F(1) is coupled via a rotary mechanism of the central stalk subunits to proton translocation. Component of the F(0) channel, it forms part of the peripheral stalk, linking F(1) to F(0). In Mesomycoplasma hyopneumoniae (strain J / ATCC 25934 / NCTC 10110) (Mycoplasma hyopneumoniae), this protein is ATP synthase subunit b.